A 225-amino-acid polypeptide reads, in one-letter code: Ureidoacrylate amidohydrolase RutB (225 aa).

Asp-22 serves as the catalytic Proton acceptor. The active site involves Lys-131. Residue Cys-164 is the Nucleophile of the active site.

Belongs to the isochorismatase family. RutB subfamily.

The enzyme catalyses (Z)-3-ureidoacrylate + H2O + H(+) = (Z)-3-aminoacrylate + NH4(+) + CO2. It carries out the reaction (Z)-3-ureidoacrylate + H2O = (Z)-3-aminoacrylate + carbamate + H(+). The catalysed reaction is (Z)-2-methylureidoacrylate + H2O + H(+) = (Z)-2-methylaminoacrylate + NH4(+) + CO2. Its function is as follows. Hydrolyzes ureidoacrylate to form aminoacrylate and carbamate. The carbamate hydrolyzes spontaneously, thereby releasing one of the nitrogen atoms of the pyrimidine ring as ammonia and one of its carbon atoms as CO2. The polypeptide is Ureidoacrylate amidohydrolase RutB (Caulobacter vibrioides (strain ATCC 19089 / CIP 103742 / CB 15) (Caulobacter crescentus)).